The primary structure comprises 126 residues: Putative phosphotransferase enzyme IIB component UU178 (126 aa).

Residues 11-31 traverse the membrane as a helical segment; that stretch reads LIIFLGIITFGIFIIYFFTKA. In terms of domain architecture, PTS EIIB type-1 spans 49-126; sequence PFSLNDFYNC…KELIKKDLFS (78 aa).

To M.genitalium MG129 and M.pneumoniae MPN268.

It is found in the membrane. The phosphoenolpyruvate-dependent sugar phosphotransferase system (PTS), a major carbohydrate active -transport system, catalyzes the phosphorylation of incoming sugar substrates concomitant with their translocation across the cell membrane. This chain is Putative phosphotransferase enzyme IIB component UU178, found in Ureaplasma parvum serovar 3 (strain ATCC 700970).